Consider the following 294-residue polypeptide: Small ribosomal subunit protein uS3 (294 aa).

Positions 39–107 constitute a KH type-2 domain; that stretch reads VREYLKTKLK…PVAVNIEEVR (69 aa). Residues 210–294 form a disordered region; it reads RNDLPAVETP…AAPAADVKGE (85 aa). The span at 219–238 shows a compositional bias: basic and acidic residues; the sequence is PRPDEERRPRGPRRDGRPGG. Composition is skewed to low complexity over residues 249-258 and 281-294; these read RPAAGNSAPA and VAAPAAPAADVKGE.

It belongs to the universal ribosomal protein uS3 family. Part of the 30S ribosomal subunit. Forms a tight complex with proteins S10 and S14.

In terms of biological role, binds the lower part of the 30S subunit head. Binds mRNA in the 70S ribosome, positioning it for translation. The sequence is that of Small ribosomal subunit protein uS3 from Verminephrobacter eiseniae (strain EF01-2).